The sequence spans 95 residues: Aspartyl/glutamyl-tRNA(Asn/Gln) amidotransferase subunit C (95 aa).

The protein belongs to the GatC family. In terms of assembly, heterotrimer of A, B and C subunits.

The catalysed reaction is L-glutamyl-tRNA(Gln) + L-glutamine + ATP + H2O = L-glutaminyl-tRNA(Gln) + L-glutamate + ADP + phosphate + H(+). It catalyses the reaction L-aspartyl-tRNA(Asn) + L-glutamine + ATP + H2O = L-asparaginyl-tRNA(Asn) + L-glutamate + ADP + phosphate + 2 H(+). Functionally, allows the formation of correctly charged Asn-tRNA(Asn) or Gln-tRNA(Gln) through the transamidation of misacylated Asp-tRNA(Asn) or Glu-tRNA(Gln) in organisms which lack either or both of asparaginyl-tRNA or glutaminyl-tRNA synthetases. The reaction takes place in the presence of glutamine and ATP through an activated phospho-Asp-tRNA(Asn) or phospho-Glu-tRNA(Gln). The chain is Aspartyl/glutamyl-tRNA(Asn/Gln) amidotransferase subunit C from Pseudomonas entomophila (strain L48).